Reading from the N-terminus, the 322-residue chain is Olfactory receptor 11L1 (322 aa).

Residues 1–25 (MEPQNTSTVTNFQLLGFQNLLEWQA) are Extracellular-facing. N-linked (GlcNAc...) asparagine glycosylation is present at asparagine 5. Residues 26–46 (LLFVIFLLIYCLTIIGNVVII) traverse the membrane as a helical segment. The Cytoplasmic portion of the chain corresponds to 47–54 (TVVSQGLR). The helical transmembrane segment at 55 to 75 (LHSPMYMFLQHLSFLEVWYTS) threads the bilayer. At 76 to 99 (TTVPLLLANLLSWGQAISFSACMA) the chain is on the extracellular side. An intrachain disulfide couples cysteine 97 to cysteine 189. A helical membrane pass occupies residues 100-120 (QLYFFVFLGATECFLLAFMAY). Topologically, residues 121–139 (DRYLAICSPLRYPFLMHRG) are cytoplasmic. Residues 140–160 (LCARLVVVSWCTGVSTGFLPS) form a helical membrane-spanning segment. Over 161–197 (LMISRLDFCGRNQINHFFCDLPPLMQLSCSRVYITEV) the chain is Extracellular. The chain crosses the membrane as a helical span at residues 198–217 (TIFILSIAVLCICFFLTLGP). Topologically, residues 218–237 (YVFIVSSILRIPSTSGRRKT) are cytoplasmic. A helical membrane pass occupies residues 238–258 (FSTCGSHLAVVTLYYGTMISM). Topologically, residues 259–271 (YVCPSPHLLPEIN) are extracellular. A helical membrane pass occupies residues 272–292 (KIISVFYTVVTPLLNPVIYSL). Residues 293 to 322 (RNKDFKEAVRKVMRRKCGILWSTSKRKFLY) are Cytoplasmic-facing.

Belongs to the G-protein coupled receptor 1 family.

It is found in the cell membrane. Odorant receptor. This chain is Olfactory receptor 11L1 (OR11L1), found in Homo sapiens (Human).